Consider the following 336-residue polypeptide: Casein kinase II subunit alpha (336 aa).

Residues 37 to 322 (YQLVRKLGRG…AREAMAHPYF (286 aa)) form the Protein kinase domain. Residues 43–51 (LGRGKYSEV) and lysine 66 contribute to the ATP site. Aspartate 154 serves as the catalytic Proton acceptor.

The protein belongs to the protein kinase superfamily. Ser/Thr protein kinase family. CK2 subfamily. In terms of assembly, tetramer of two alpha and two beta chains. Mg(2+) serves as cofactor.

Its subcellular location is the nucleus. It is found in the nucleolus. The catalysed reaction is L-seryl-[protein] + ATP = O-phospho-L-seryl-[protein] + ADP + H(+). The enzyme catalyses L-threonyl-[protein] + ATP = O-phospho-L-threonyl-[protein] + ADP + H(+). Its function is as follows. Casein kinases are operationally defined by their preferential utilization of acidic proteins such as caseins as substrates. The alpha chain contains the catalytic site. May participate in Wnt signaling. In Drosophila melanogaster (Fruit fly), this protein is Casein kinase II subunit alpha (CkIIalpha).